The chain runs to 735 residues: Delta-1-pyrroline-5-carboxylate synthase 2 (735 aa).

Residues 1–315 (MGRGGIGGAG…WGCSKEATAR (315 aa)) form a glutamate 5-kinase region. Substrate is bound by residues Ser79, Asp176, and Asn195. Residues 215–216 (SD), 221–226 (YSGPPS), and 255–261 (RGGMQAK) each bind ATP. The gamma-glutamyl phosphate reductase stretch occupies residues 316–735 (EMAVAARDCS…VYTHRELPLQ (420 aa)).

It in the N-terminal section; belongs to the glutamate 5-kinase family. In the C-terminal section; belongs to the gamma-glutamyl phosphate reductase family.

The catalysed reaction is L-glutamate + ATP = L-glutamyl 5-phosphate + ADP. The enzyme catalyses L-glutamate 5-semialdehyde + phosphate + NADP(+) = L-glutamyl 5-phosphate + NADPH + H(+). It participates in amino-acid biosynthesis; L-proline biosynthesis; L-glutamate 5-semialdehyde from L-glutamate: step 1/2. Its pathway is amino-acid biosynthesis; L-proline biosynthesis; L-glutamate 5-semialdehyde from L-glutamate: step 2/2. Its activity is regulated as follows. Feedback regulated by proline. Its function is as follows. P5CS plays a key role in proline biosynthesis, leading to osmoregulation in plants. Involved in abiotic stress tolerance. The sequence is that of Delta-1-pyrroline-5-carboxylate synthase 2 from Oryza sativa subsp. japonica (Rice).